Here is a 164-residue protein sequence, read N- to C-terminus: Ribosome maturation factor RimM (164 aa).

One can recognise a PRC barrel domain in the interval Lys90–Trp161.

The protein belongs to the RimM family. Binds ribosomal protein uS19.

The protein resides in the cytoplasm. An accessory protein needed during the final step in the assembly of 30S ribosomal subunit, possibly for assembly of the head region. Essential for efficient processing of 16S rRNA. May be needed both before and after RbfA during the maturation of 16S rRNA. It has affinity for free ribosomal 30S subunits but not for 70S ribosomes. This chain is Ribosome maturation factor RimM, found in Clostridium botulinum (strain Hall / ATCC 3502 / NCTC 13319 / Type A).